The primary structure comprises 349 residues: Glycerol-3-phosphate dehydrogenase [NAD(P)+] (349 aa).

The NADPH site is built by Ser31, Phe32, Arg52, Lys53, and Lys126. Sn-glycerol 3-phosphate is bound by residues Lys126, Gly154, and Ser156. Residue Ala158 coordinates NADPH. Residues Lys209, Asp262, Ser272, Arg273, and Asn274 each coordinate sn-glycerol 3-phosphate. The active-site Proton acceptor is Lys209. Residue Arg273 coordinates NADPH. NADPH-binding residues include Val297 and Glu299.

Belongs to the NAD-dependent glycerol-3-phosphate dehydrogenase family.

It is found in the cytoplasm. The catalysed reaction is sn-glycerol 3-phosphate + NAD(+) = dihydroxyacetone phosphate + NADH + H(+). It carries out the reaction sn-glycerol 3-phosphate + NADP(+) = dihydroxyacetone phosphate + NADPH + H(+). It functions in the pathway membrane lipid metabolism; glycerophospholipid metabolism. Catalyzes the reduction of the glycolytic intermediate dihydroxyacetone phosphate (DHAP) to sn-glycerol 3-phosphate (G3P), the key precursor for phospholipid synthesis. In Clostridium tetani (strain Massachusetts / E88), this protein is Glycerol-3-phosphate dehydrogenase [NAD(P)+].